Consider the following 358-residue polypeptide: Phosphoserine aminotransferase (358 aa).

R41 provides a ligand contact to L-glutamate. Residues 75-76 (AS), W100, T148, D167, and Q190 each bind pyridoxal 5'-phosphate. K191 carries the post-translational modification N6-(pyridoxal phosphate)lysine. Residue 233–234 (NT) coordinates pyridoxal 5'-phosphate.

The protein belongs to the class-V pyridoxal-phosphate-dependent aminotransferase family. SerC subfamily. In terms of assembly, homodimer. Pyridoxal 5'-phosphate is required as a cofactor.

Its subcellular location is the cytoplasm. It catalyses the reaction O-phospho-L-serine + 2-oxoglutarate = 3-phosphooxypyruvate + L-glutamate. It carries out the reaction 4-(phosphooxy)-L-threonine + 2-oxoglutarate = (R)-3-hydroxy-2-oxo-4-phosphooxybutanoate + L-glutamate. The protein operates within amino-acid biosynthesis; L-serine biosynthesis; L-serine from 3-phospho-D-glycerate: step 2/3. It participates in cofactor biosynthesis; pyridoxine 5'-phosphate biosynthesis; pyridoxine 5'-phosphate from D-erythrose 4-phosphate: step 3/5. Catalyzes the reversible conversion of 3-phosphohydroxypyruvate to phosphoserine and of 3-hydroxy-2-oxo-4-phosphonooxybutanoate to phosphohydroxythreonine. The polypeptide is Phosphoserine aminotransferase (Campylobacter jejuni (strain RM1221)).